We begin with the raw amino-acid sequence, 116 residues long: Ribosome-binding factor A (116 aa).

This sequence belongs to the RbfA family. In terms of assembly, monomer. Binds 30S ribosomal subunits, but not 50S ribosomal subunits or 70S ribosomes.

The protein localises to the cytoplasm. In terms of biological role, one of several proteins that assist in the late maturation steps of the functional core of the 30S ribosomal subunit. Associates with free 30S ribosomal subunits (but not with 30S subunits that are part of 70S ribosomes or polysomes). Required for efficient processing of 16S rRNA. May interact with the 5'-terminal helix region of 16S rRNA. The protein is Ribosome-binding factor A of Levilactobacillus brevis (strain ATCC 367 / BCRC 12310 / CIP 105137 / JCM 1170 / LMG 11437 / NCIMB 947 / NCTC 947) (Lactobacillus brevis).